Consider the following 480-residue polypeptide: Probable tRNA N6-adenosine threonylcarbamoyltransferase, mitochondrial (480 aa).

The transit peptide at 1-86 directs the protein to the mitochondrion; that stretch reads MVRLFLTLSP…NPNFDDNLVV (86 aa). A divalent metal cation contacts are provided by His194 and His198. Substrate-binding positions include 217 to 221, Asp250, Gly265, Glu269, 373 to 374, and Thr401; these read LISGG and SN. An a divalent metal cation-binding site is contributed by Asp402.

This sequence belongs to the KAE1 / TsaD family. Homodimer. A divalent metal cation serves as cofactor. Expressed in young developing leaves, roots, flowers and siliques.

The protein resides in the mitochondrion inner membrane. It carries out the reaction L-threonylcarbamoyladenylate + adenosine(37) in tRNA = N(6)-L-threonylcarbamoyladenosine(37) in tRNA + AMP + H(+). Its function is as follows. Required for the formation of a threonylcarbamoyl group on adenosine at position 37 (t(6)A37) in mitochondrial tRNAs that read codons beginning with adenine. Probably involved in the transfer of the threonylcarbamoyl moiety of threonylcarbamoyl-AMP (TC-AMP) to the N6 group of A37. Involved in mitochondrial genome maintenance. May have a role in embryonic development in plants. The protein is Probable tRNA N6-adenosine threonylcarbamoyltransferase, mitochondrial of Arabidopsis thaliana (Mouse-ear cress).